The following is a 495-amino-acid chain: Transcription termination/antitermination protein NusA (495 aa).

The S1 motif domain occupies 135–200; the sequence is GQIITGIVKK…RGAQLFLSRS (66 aa). Residues 302-370 form the KH domain; the sequence is HHTMDIAVDS…KNLNVSEKVI (69 aa). 2 tandem repeats follow at residues 364 to 414 and 439 to 489. The interval 364–489 is 2 X 51 AA approximate repeats; it reads NVSEKVIKTL…LLIMAARNIC (126 aa).

The protein belongs to the NusA family. Monomer. Binds directly to the core enzyme of the DNA-dependent RNA polymerase and to nascent RNA.

The protein localises to the cytoplasm. Participates in both transcription termination and antitermination. In Buchnera aphidicola subsp. Schizaphis graminum (strain Sg), this protein is Transcription termination/antitermination protein NusA.